The chain runs to 90 residues: Small ribosomal subunit protein bS20 (90 aa).

It belongs to the bacterial ribosomal protein bS20 family.

Functionally, binds directly to 16S ribosomal RNA. The chain is Small ribosomal subunit protein bS20 from Rickettsia felis (strain ATCC VR-1525 / URRWXCal2) (Rickettsia azadi).